Reading from the N-terminus, the 248-residue chain is tRNA (guanine-N(1)-)-methyltransferase (248 aa).

Residues Gly-113 and 133–138 (VGDYVL) contribute to the S-adenosyl-L-methionine site.

Belongs to the RNA methyltransferase TrmD family. Homodimer.

The protein localises to the cytoplasm. It carries out the reaction guanosine(37) in tRNA + S-adenosyl-L-methionine = N(1)-methylguanosine(37) in tRNA + S-adenosyl-L-homocysteine + H(+). Functionally, specifically methylates guanosine-37 in various tRNAs. This chain is tRNA (guanine-N(1)-)-methyltransferase, found in Shewanella sp. (strain ANA-3).